The sequence spans 230 residues: MKKITIAIDGFSSTGKSTLAKQLAKELEYVYVDTGAMYRAVAYFAMQNKFIGADFFNKEALIEALPKIQLEFKFNSDLGFAEMYLNGENVEKQIRTIEVSNFVSKVAEVSEVRSKLVEQQQEMGTNKAIVMDGRDIGTVVFPNAELKIFMTASAETRAQRRFDELQQKGDNVSYEDVLKNVVERDYIDTHREDSPLVIADDAIEIDNSYLNKEEQFAAVLELVNDVVKID.

Residue 10–18 participates in ATP binding; that stretch reads GFSSTGKST.

This sequence belongs to the cytidylate kinase family. Type 1 subfamily.

It localises to the cytoplasm. It catalyses the reaction CMP + ATP = CDP + ADP. The enzyme catalyses dCMP + ATP = dCDP + ADP. This Flavobacterium johnsoniae (strain ATCC 17061 / DSM 2064 / JCM 8514 / BCRC 14874 / CCUG 350202 / NBRC 14942 / NCIMB 11054 / UW101) (Cytophaga johnsonae) protein is Cytidylate kinase.